We begin with the raw amino-acid sequence, 196 residues long: Beta-crystallin A4 (196 aa).

T2 is modified (N-acetylthreonine). An N-terminal arm region spans residues T2–H11. Beta/gamma crystallin 'Greek key' domains follow at residues W12–S51 and G52–A98. Residues C99–D104 form a connecting peptide region. 2 Beta/gamma crystallin 'Greek key' domains span residues S105–S146 and G147–Q195.

In terms of assembly, homo/heterodimer, or complexes of higher-order. The structure of beta-crystallin oligomers seems to be stabilized through interactions between the N-terminal arms.

Crystallins are the dominant structural components of the vertebrate eye lens. The sequence is that of Beta-crystallin A4 (Cryba4) from Rattus norvegicus (Rat).